The chain runs to 352 residues: Selenide, water dikinase (352 aa).

Cysteine 23 is an active-site residue. ATP is bound by residues lysine 26 and serine 54 to aspartate 56. Residue aspartate 57 coordinates Mg(2+). ATP contacts are provided by residues aspartate 74, aspartate 97, and glycine 145–serine 147. Aspartate 97 serves as a coordination point for Mg(2+). Mg(2+) is bound at residue aspartate 233.

This sequence belongs to the selenophosphate synthase 1 family. Class I subfamily. In terms of assembly, homodimer. Requires Mg(2+) as cofactor.

The enzyme catalyses hydrogenselenide + ATP + H2O = selenophosphate + AMP + phosphate + 2 H(+). Functionally, synthesizes selenophosphate from selenide and ATP. This Shewanella baltica (strain OS185) protein is Selenide, water dikinase.